A 244-amino-acid chain; its full sequence is DnaJ homolog subfamily C member 4 (244 aa).

Residues 37–102 (NYYELLGVHP…ESRRNYDHQL (66 aa)) enclose the J domain. Positions 96 to 127 (RNYDHQLHSASPPKSSGSTAEPKYTQQTHSSW) are disordered. Residues 103-127 (HSASPPKSSGSTAEPKYTQQTHSSW) show a composition bias toward polar residues. Residues 159–178 (VLGYCLLLMVAGMGLHYVAF) form a helical membrane-spanning segment. Residues 208-244 (RANRARIQQERQQRQQPRAEPSLPPESSRIMPQDTSP) form a disordered region.

It is found in the membrane. The protein is DnaJ homolog subfamily C member 4 (Dnajc4) of Mus musculus (Mouse).